Consider the following 100-residue polypeptide: Large ribosomal subunit protein uL23 (100 aa).

The protein belongs to the universal ribosomal protein uL23 family. In terms of assembly, part of the 50S ribosomal subunit. Contacts protein L29, and trigger factor when it is bound to the ribosome.

In terms of biological role, one of the early assembly proteins it binds 23S rRNA. One of the proteins that surrounds the polypeptide exit tunnel on the outside of the ribosome. Forms the main docking site for trigger factor binding to the ribosome. The sequence is that of Large ribosomal subunit protein uL23 from Kosmotoga olearia (strain ATCC BAA-1733 / DSM 21960 / TBF 19.5.1).